The chain runs to 697 residues: Serotransferrin (697 aa).

A signal peptide spans 1–19 (MRLTVGALLACAALGLCLA). 2 Transferrin-like domains span residues 25 to 347 (VKWC…NQQE) and 360 to 682 (VKWC…NMRK). 2 disulfides stabilise this stretch: Cys-28–Cys-67 and Cys-38–Cys-58. Arg-42 is subject to Dimethylated arginine. Fe(3+) is bound by residues Asp-82 and Tyr-114. 8 disulfide bridges follow: Cys-137-Cys-213, Cys-156-Cys-350, Cys-177-Cys-193, Cys-180-Cys-196, Cys-190-Cys-198, Cys-246-Cys-260, Cys-363-Cys-395, and Cys-373-Cys-386. Hydrogencarbonate contacts are provided by Thr-139, Arg-143, Ala-145, and Gly-146. Tyr-207 contacts Fe(3+). His-268 is a binding site for Fe(3+). A Phosphoserine modification is found at Ser-388. Residues Asp-410 and Tyr-448 each coordinate Fe(3+). 8 disulfides stabilise this stretch: Cys-420-Cys-692, Cys-435-Cys-655, Cys-472-Cys-543, Cys-496-Cys-683, Cys-506-Cys-520, Cys-517-Cys-526, Cys-583-Cys-597, and Cys-633-Cys-638. Thr-474, Arg-478, Ala-480, and Gly-481 together coordinate hydrogencarbonate. A glycan (N-linked (GlcNAc...) asparagine) is linked at Asn-513. A Fe(3+)-binding site is contributed by Tyr-537. His-605 is a binding site for Fe(3+). Phosphoserine is present on Ser-684.

This sequence belongs to the transferrin family. As to quaternary structure, monomer. Part of a complex composed of SLC40A1/ferroportin, TF/transferrin and HEPH/hephaestin that transfers iron from cells to transferrin. In terms of tissue distribution, expressed by the liver and secreted in plasma.

The protein localises to the secreted. Functionally, transferrins are iron binding transport proteins which can bind two Fe(3+) ions in association with the binding of an anion, usually bicarbonate. It is responsible for the transport of iron from sites of absorption and heme degradation to those of storage and utilization. Serum transferrin may also have a further role in stimulating cell proliferation. The polypeptide is Serotransferrin (Tf) (Mus musculus (Mouse)).